Reading from the N-terminus, the 319-residue chain is Pyrroline-5-carboxylate reductase 1, mitochondrial (319 aa).

The residue at position 2 (Ser2) is an N-acetylserine. NADP(+) is bound by residues 6 to 11 (IGAGQL) and Ser34. Residues Ala8, Gln10, Leu11, Ser34, Asp36, Asn56, Val70, Lys71, and Ala97 each contribute to the NADPH site. NADP(+)-binding positions include Asn56, 69 to 72 (AVKP), and 95 to 97 (CAA). Residue Glu164 participates in L-proline binding. Residue Asn230 coordinates NADPH. L-proline is bound by residues Ala237 and Thr238. Residues Ser278 and Ser301 each carry the phosphoserine modification. The interval 294–319 (SPAGTALSPSGHTKLLPRSLAPAGKD) is disordered.

The protein belongs to the pyrroline-5-carboxylate reductase family. Homodecamer; composed of 5 homodimers. Interacts with LTO1.

Its subcellular location is the mitochondrion. The enzyme catalyses L-proline + NADP(+) = (S)-1-pyrroline-5-carboxylate + NADPH + 2 H(+). It carries out the reaction L-proline + NAD(+) = (S)-1-pyrroline-5-carboxylate + NADH + 2 H(+). It functions in the pathway amino-acid biosynthesis; L-proline biosynthesis; L-proline from L-glutamate 5-semialdehyde: step 1/1. Subject to competitive inhibition by the reaction product proline. Subject to competitive inhibition by stearoyl coenzyme A. Functionally, oxidoreductase that catalyzes the last step in proline biosynthesis, which corresponds to the reduction of pyrroline-5-carboxylate to L-proline using NAD(P)H. At physiologic concentrations, has higher specific activity in the presence of NADH. Involved in the cellular response to oxidative stress. The protein is Pyrroline-5-carboxylate reductase 1, mitochondrial of Homo sapiens (Human).